We begin with the raw amino-acid sequence, 787 residues long: PAN2-PAN3 deadenylation complex subunit pan3 (787 aa).

The segment at Met-1–Gly-20 is disordered. Residues Pro-11 to Gly-20 show a composition bias toward low complexity. The C3H1-type zinc-finger motif lies at Gly-23–Gln-51. Disordered regions lie at residues Glu-131 to Asp-162, Thr-179 to Ser-210, and Gly-226 to Thr-291. Low complexity-rich tracts occupy residues Asn-143 to Ser-154 and Ser-200 to Ser-210. The PABPC-interacting motif-2 (PAM-2) motif lies at Lys-185 to Ser-200. A compositionally biased stretch (polar residues) spans Thr-265–Ser-290. Residues Gln-365–Gly-650 are pseudokinase domain. Residues Arg-422, Asp-471 to Thr-478, and Thr-545 to Lys-546 contribute to the ATP site. Residues Ala-651 to Thr-689 adopt a coiled-coil conformation. The segment at Ile-690 to Leu-787 is knob domain.

The protein belongs to the protein kinase superfamily. PAN3 family. In terms of assembly, homodimer. Forms a heterotrimer with a catalytic subunit pan2 to form the poly(A)-nuclease (PAN) deadenylation complex. Interacts (via PAM-2 motif) with poly(A)-binding protein pabpc1 (via PABC domain), conferring substrate specificity of the enzyme complex. Interacts with the GW182 family proteins tnrc6a, tnrc6b and tnrc6c.

It is found in the cytoplasm. It localises to the P-body. In terms of biological role, regulatory subunit of the poly(A)-nuclease (PAN) deadenylation complex, one of two cytoplasmic mRNA deadenylases involved in general and miRNA-mediated mRNA turnover. PAN specifically shortens poly(A) tails of RNA and the activity is stimulated by poly(A)-binding protein (PABP). PAN deadenylation is followed by rapid degradation of the shortened mRNA tails by the CCR4-NOT complex. Deadenylated mRNAs are then degraded by two alternative mechanisms, namely exosome-mediated 3'-5' exonucleolytic degradation, or deadenylation-dependent mRNA decaping and subsequent 5'-3' exonucleolytic degradation by XRN1. PAN3 acts as a positive regulator for PAN activity, recruiting the catalytic subunit PAN2 to mRNA via its interaction with RNA and PABP, and to miRNA targets via its interaction with GW182 family proteins. The chain is PAN2-PAN3 deadenylation complex subunit pan3 from Xenopus tropicalis (Western clawed frog).